We begin with the raw amino-acid sequence, 162 residues long: Epoxidase pydX (162 aa).

The N-terminal stretch at 1–26 (MSLIALPLRLLRLLPAITSTWVLAFA) is a signal peptide. Helical transmembrane passes span 62–82 (WILIVVYPINYALGVVNLFVG) and 89–109 (TGAMSWYTIGLLFSLAHMGYM). Asparagine 127 and asparagine 139 each carry an N-linked (GlcNAc...) asparagine glycan.

It belongs to the epoxidase xenD family.

It is found in the membrane. It participates in mycotoxin biosynthesis. Its function is as follows. Epoxidase; part of the gene cluster that mediates the biosynthesis of pyrrocidines, fungal natural products containing a macrocyclic para-cyclophane connected to a decahydrofluorene ring system that show potent antibiotic activities toward Gram-negative bacteria. Within the pathway, pydX functions synergistically with pydB, pydE and pydZ to form the cyclophane. The pathway begins with the PKS-NRPS pydA which, with the help of the trans-enoyl reductase pydC, synthesizes the polyketide-tyrosyl acyl thioester product which can be reductively off-loaded by the terminal reductase (R) domain in pydA. The alpha/beta hydrolase pydG is then required to catalyze the subsequent Knoevenagel condensation that affords the 3-pyrrolin-2-one ring, whereas the four proteins pydB, pydE, pydX and pydZ then function synergistically to form the cyclophane. PydB and the membrane-bound pydX and pydZ are lipid-binding proteins that can sequester and mold the pdyG product into the inverse S-shape. Binding of the medium chain reductase pydE to the complex would trigger the cascade oxidative cyclization. PydY is involved in the Diels-Alder cycloaddition that forms the decahydrofluorene core. Additional non-enzymatic hydroxylation yields pyrrocidine A2 which can be further reduced into pyrrocidine B by an endogenous reductase. The polypeptide is Epoxidase pydX (Acremonium sp).